A 444-amino-acid chain; its full sequence is 3-phosphoshikimate 1-carboxyvinyltransferase (444 aa).

Positions 29, 30, and 34 each coordinate 3-phosphoshikimate. Lys29 is a binding site for phosphoenolpyruvate. Positions 103 and 132 each coordinate phosphoenolpyruvate. Ser177, Gln179, Asp329, and Lys356 together coordinate 3-phosphoshikimate. Gln179 lines the phosphoenolpyruvate pocket. Asp329 serves as the catalytic Proton acceptor. Phosphoenolpyruvate is bound by residues Arg360 and Arg402.

The protein belongs to the EPSP synthase family. As to quaternary structure, monomer.

Its subcellular location is the cytoplasm. It catalyses the reaction 3-phosphoshikimate + phosphoenolpyruvate = 5-O-(1-carboxyvinyl)-3-phosphoshikimate + phosphate. It participates in metabolic intermediate biosynthesis; chorismate biosynthesis; chorismate from D-erythrose 4-phosphate and phosphoenolpyruvate: step 6/7. Catalyzes the transfer of the enolpyruvyl moiety of phosphoenolpyruvate (PEP) to the 5-hydroxyl of shikimate-3-phosphate (S3P) to produce enolpyruvyl shikimate-3-phosphate and inorganic phosphate. This chain is 3-phosphoshikimate 1-carboxyvinyltransferase, found in Prochlorococcus marinus (strain NATL2A).